The sequence spans 106 residues: Flagellar transcriptional regulator FlhD (106 aa).

This sequence belongs to the FlhD family. In terms of assembly, homodimer; disulfide-linked. Forms a heterohexamer composed of two FlhC and four FlhD subunits. Each FlhC binds a FlhD dimer, forming a heterotrimer, and a hexamer assembles by dimerization of two heterotrimers.

It localises to the cytoplasm. In terms of biological role, functions in complex with FlhC as a master transcriptional regulator that regulates transcription of several flagellar and non-flagellar operons by binding to their promoter region. Activates expression of class 2 flagellar genes, including fliA, which is a flagellum-specific sigma factor that turns on the class 3 genes. Also regulates genes whose products function in a variety of physiological pathways. This Burkholderia pseudomallei (strain 1710b) protein is Flagellar transcriptional regulator FlhD.